A 224-amino-acid chain; its full sequence is Prolactin-3D1 (224 aa).

The N-terminal stretch at 1–29 (MQLTLNLSGSAGMQLLLLVSSLLLWENVS) is a signal peptide. 2 disulfide bridges follow: C81–C199 and C216–C224. Residues N109 and N158 are each glycosylated (N-linked (GlcNAc...) asparagine).

It belongs to the somatotropin/prolactin family.

It is found in the secreted. The protein is Prolactin-3D1 (Prl3d1) of Mus musculus (Mouse).